The chain runs to 328 residues: tRNA uridine(34) hydroxylase (328 aa).

One can recognise a Rhodanese domain in the interval 123 to 217 (SDPETVLIDT…YLEEVPKEKS (95 aa)). The active-site Cysteine persulfide intermediate is the Cys177. A disordered region spans residues 304 to 328 (AKKLAQLNKQKKQQAKEAARKKAQQ). A compositionally biased stretch (basic and acidic residues) spans 317–328 (QAKEAARKKAQQ).

The protein belongs to the TrhO family.

The catalysed reaction is uridine(34) in tRNA + AH2 + O2 = 5-hydroxyuridine(34) in tRNA + A + H2O. In terms of biological role, catalyzes oxygen-dependent 5-hydroxyuridine (ho5U) modification at position 34 in tRNAs. The protein is tRNA uridine(34) hydroxylase of Francisella tularensis subsp. holarctica (strain LVS).